A 35-amino-acid chain; its full sequence is Conotoxin Ca15a (35 aa).

Position 8 is a 4-hydroxyproline (Pro-8).

Post-translationally, contains 4 disulfide bonds. Expressed by the venom duct.

It is found in the secreted. The polypeptide is Conotoxin Ca15a (Conus caracteristicus (Characteristic cone)).